The chain runs to 164 residues: Crossover junction endodeoxyribonuclease RuvC (164 aa).

Catalysis depends on residues D7, E67, and D140. Residues D7, E67, and D140 each contribute to the Mg(2+) site.

This sequence belongs to the RuvC family. In terms of assembly, homodimer which binds Holliday junction (HJ) DNA. The HJ becomes 2-fold symmetrical on binding to RuvC with unstacked arms; it has a different conformation from HJ DNA in complex with RuvA. In the full resolvosome a probable DNA-RuvA(4)-RuvB(12)-RuvC(2) complex forms which resolves the HJ. It depends on Mg(2+) as a cofactor.

The protein resides in the cytoplasm. The catalysed reaction is Endonucleolytic cleavage at a junction such as a reciprocal single-stranded crossover between two homologous DNA duplexes (Holliday junction).. Its function is as follows. The RuvA-RuvB-RuvC complex processes Holliday junction (HJ) DNA during genetic recombination and DNA repair. Endonuclease that resolves HJ intermediates. Cleaves cruciform DNA by making single-stranded nicks across the HJ at symmetrical positions within the homologous arms, yielding a 5'-phosphate and a 3'-hydroxyl group; requires a central core of homology in the junction. The consensus cleavage sequence is 5'-(A/T)TT(C/G)-3'. Cleavage occurs on the 3'-side of the TT dinucleotide at the point of strand exchange. HJ branch migration catalyzed by RuvA-RuvB allows RuvC to scan DNA until it finds its consensus sequence, where it cleaves and resolves the cruciform DNA. The chain is Crossover junction endodeoxyribonuclease RuvC from Chloroflexus aurantiacus (strain ATCC 29364 / DSM 637 / Y-400-fl).